Here is a 1603-residue protein sequence, read N- to C-terminus: Pentafunctional AROM polypeptide (1603 aa).

The interval 1–384 (MGVPTKISIL…YEPRASTVSN (384 aa)) is 3-dehydroquinate synthase. NAD(+) contacts are provided by residues 44–46 (DTN), 81–84 (ESSK), 114–116 (GGV), and Asp119. A 7-phospho-2-dehydro-3-deoxy-D-arabino-heptonate-binding site is contributed by Arg130. An NAD(+)-binding site is contributed by 139–140 (TT). 2 residues coordinate 7-phospho-2-dehydro-3-deoxy-D-arabino-heptonate: Asp146 and Lys152. An NAD(+)-binding site is contributed by Lys161. Asn162 provides a ligand contact to 7-phospho-2-dehydro-3-deoxy-D-arabino-heptonate. NAD(+)-binding positions include 179–182 (FLNT) and Asn190. Glu194 contacts Zn(2+). 7-phospho-2-dehydro-3-deoxy-D-arabino-heptonate contacts are provided by residues 194–197 (EVIK) and Lys250. Glu260 functions as the Proton acceptor; for 3-dehydroquinate synthase activity in the catalytic mechanism. 7-phospho-2-dehydro-3-deoxy-D-arabino-heptonate contacts are provided by residues 264–268 (RNLLN) and His271. Residue His271 participates in Zn(2+) binding. His275 acts as the Proton acceptor; for 3-dehydroquinate synthase activity in catalysis. 7-phospho-2-dehydro-3-deoxy-D-arabino-heptonate is bound by residues His287 and Lys356. His287 contacts Zn(2+). Residues 397 to 842 (VYPGFPKSLN…WNTLAQTFKV (446 aa)) are EPSP synthase. Cys824 functions as the For EPSP synthase activity in the catalytic mechanism. Residues 872–1064 (AASIFIIGMR…RRKENTFFVS (193 aa)) form a shikimate kinase region. 879-886 (GMRGAGKT) is an ATP binding site. Positions 1065–1285 (LTFPDLTPAS…AAPGQLSARE (221 aa)) are 3-dehydroquinase. The active-site Proton acceptor; for 3-dehydroquinate dehydratase activity is the His1188. The active-site Schiff-base intermediate with substrate; for 3-dehydroquinate dehydratase activity is the Lys1216. The shikimate dehydrogenase stretch occupies residues 1298–1603 (AKKFAVIGKP…GVSSSDDTIS (306 aa)).

In the N-terminal section; belongs to the sugar phosphate cyclases superfamily. Dehydroquinate synthase family. It in the 2nd section; belongs to the EPSP synthase family. This sequence in the 3rd section; belongs to the shikimate kinase family. The protein in the 4th section; belongs to the type-I 3-dehydroquinase family. In the C-terminal section; belongs to the shikimate dehydrogenase family. Homodimer. Zn(2+) serves as cofactor.

The protein resides in the cytoplasm. It carries out the reaction 7-phospho-2-dehydro-3-deoxy-D-arabino-heptonate = 3-dehydroquinate + phosphate. It catalyses the reaction 3-dehydroquinate = 3-dehydroshikimate + H2O. The enzyme catalyses shikimate + NADP(+) = 3-dehydroshikimate + NADPH + H(+). The catalysed reaction is shikimate + ATP = 3-phosphoshikimate + ADP + H(+). It carries out the reaction 3-phosphoshikimate + phosphoenolpyruvate = 5-O-(1-carboxyvinyl)-3-phosphoshikimate + phosphate. Its pathway is metabolic intermediate biosynthesis; chorismate biosynthesis; chorismate from D-erythrose 4-phosphate and phosphoenolpyruvate: step 2/7. The protein operates within metabolic intermediate biosynthesis; chorismate biosynthesis; chorismate from D-erythrose 4-phosphate and phosphoenolpyruvate: step 3/7. It participates in metabolic intermediate biosynthesis; chorismate biosynthesis; chorismate from D-erythrose 4-phosphate and phosphoenolpyruvate: step 4/7. It functions in the pathway metabolic intermediate biosynthesis; chorismate biosynthesis; chorismate from D-erythrose 4-phosphate and phosphoenolpyruvate: step 5/7. Its pathway is metabolic intermediate biosynthesis; chorismate biosynthesis; chorismate from D-erythrose 4-phosphate and phosphoenolpyruvate: step 6/7. Its function is as follows. The AROM polypeptide catalyzes 5 consecutive enzymatic reactions in prechorismate polyaromatic amino acid biosynthesis. The protein is Pentafunctional AROM polypeptide of Paracoccidioides brasiliensis (strain Pb03).